We begin with the raw amino-acid sequence, 269 residues long: 4-hydroxy-tetrahydrodipicolinate reductase (269 aa).

Residues 8–13 (GASGRM), E34, 98–100 (GTT), and 122–125 (APNM) contribute to the NAD(+) site. H155 acts as the Proton donor/acceptor in catalysis. H156 serves as a coordination point for (S)-2,3,4,5-tetrahydrodipicolinate. The active-site Proton donor is the K159. 165–166 (GT) is a binding site for (S)-2,3,4,5-tetrahydrodipicolinate.

The protein belongs to the DapB family.

The protein resides in the cytoplasm. The catalysed reaction is (S)-2,3,4,5-tetrahydrodipicolinate + NAD(+) + H2O = (2S,4S)-4-hydroxy-2,3,4,5-tetrahydrodipicolinate + NADH + H(+). The enzyme catalyses (S)-2,3,4,5-tetrahydrodipicolinate + NADP(+) + H2O = (2S,4S)-4-hydroxy-2,3,4,5-tetrahydrodipicolinate + NADPH + H(+). It participates in amino-acid biosynthesis; L-lysine biosynthesis via DAP pathway; (S)-tetrahydrodipicolinate from L-aspartate: step 4/4. Functionally, catalyzes the conversion of 4-hydroxy-tetrahydrodipicolinate (HTPA) to tetrahydrodipicolinate. The sequence is that of 4-hydroxy-tetrahydrodipicolinate reductase from Desulfotalea psychrophila (strain LSv54 / DSM 12343).